Consider the following 243-residue polypeptide: Terpene cyclase dpmaB (243 aa).

The next 6 membrane-spanning stretches (helical) occupy residues 11–31 (PGYL…GLGW), 51–71 (ALMP…IYPF), 112–132 (LPFI…ALAL), 141–161 (AFSA…QLLS), 169–189 (SYFL…QDVL), and 207–227 (IWFV…LWYV).

The protein belongs to the paxB family.

Its subcellular location is the membrane. It participates in secondary metabolite biosynthesis; terpenoid biosynthesis. Functionally, terpene cyclase; part of the gene cluster that mediates the biosynthesis of the diterpenoid pyrones subglutinols A and B. The first step of the pathway is the synthesis of the alpha-pyrone moiety by the polyketide synthase dpmaA via condensation of one acetyl-CoA starter unit with 3 malonyl-CoA units and 2 methylations. The alpha-pyrone is then combined with geranylgeranyl pyrophosphate (GGPP) formed by the GGPP synthase dpmaD through the action of the prenyltransferase dpmaC to yield a linear alpha-pyrone diterpenoid. Subsequent steps in the diterpenoid pyrone biosynthetic pathway involve the decalin core formation, which is initiated by the epoxidation of the C10-C11 olefin by the FAD-dependent oxidoreductase dpmaE, and is followed by a cyclization cascade catalyzed by the terpene cyclase dpmaB. The dehydrogenase dpmaF is then involved in tetrahydrofuran (THF) ring formation at the C5 unit to complete the formation of subglutinols A and B. This is Terpene cyclase dpmaB from Metarhizium anisopliae (Entomophthora anisopliae).